The primary structure comprises 326 residues: Cytosolic sulfotransferase 12 (326 aa).

3'-phosphoadenylyl sulfate is bound at residue 75–80; it reads KSGTTW. Residue His140 is the Proton acceptor of the active site. Residues Arg162, Ser170, Tyr228, and 290–292 each bind 3'-phosphoadenylyl sulfate; that span reads RKG.

It belongs to the sulfotransferase 1 family. In terms of assembly, dimer. Expressed in the aerial parts of seedlings, in roots, leaves and flowers. Not detected in stems and siliques.

It localises to the cytoplasm. Functionally, sulfotransferase that utilizes 3'-phospho-5'-adenylyl sulfate (PAPS) as sulfonate donor to catalyze the stereospecific sulfate conjugation of 24-epibrassinosteroids. Preferred substrates are 24-epicathasterone and 6-deoxo-24-epicathasterone. Low activity with 22-deoxy-24-epiteasterone. No activity with 24-epimers catasterone and brassinolide. Sulfonates salicylic acid. May be involved in detoxification. Enhances plant response to pathogen infection and contributes to long distance signaling in systemic acquired resistance (SAR). The polypeptide is Cytosolic sulfotransferase 12 (SOT12) (Arabidopsis thaliana (Mouse-ear cress)).